Reading from the N-terminus, the 142-residue chain is Galactose-6-phosphate isomerase subunit LacA (142 aa).

It belongs to the LacAB/RpiB family. Heteromultimeric protein consisting of LacA and LacB.

It carries out the reaction aldehydo-D-galactose 6-phosphate = keto-D-tagatose 6-phosphate. It functions in the pathway carbohydrate metabolism; D-galactose 6-phosphate degradation; D-tagatose 6-phosphate from D-galactose 6-phosphate: step 1/1. The protein is Galactose-6-phosphate isomerase subunit LacA of Staphylococcus aureus (strain JH9).